We begin with the raw amino-acid sequence, 379 residues long: Probable G-protein coupled receptor No18 (379 aa).

At 5–36 (EASITGRTAPELNASAAPLDDERELGETVAAT) the chain is on the extracellular side. The N-linked (GlcNAc...) asparagine glycan is linked to N17. A helical membrane pass occupies residues 37–58 (ALLLAIILVTIVGNSLVIISVF). The Cytoplasmic portion of the chain corresponds to 59-68 (TYRPLRSVQN). A helical transmembrane segment spans residues 69-90 (FFVVSLAVADLTVALFVLPLNV). Residues 91–107 (AYRLLNQWLLGSYLCQM) are Extracellular-facing. C105 and C184 form a disulfide bridge. A helical membrane pass occupies residues 108 to 128 (WLTCDILCCTSSILNLCVIAL). Topologically, residues 129–148 (DRYWAITDPINYAQKRTIRR) are cytoplasmic. A helical transmembrane segment spans residues 149–171 (VNTMIAAVWALSLVISVPPLLGW). Topologically, residues 172–196 (NDWPAQFTEDTPCTLTQERLFVVYS) are extracellular. Residues 197–218 (SSGSFFIPLIIMSVVYAKIFFA) traverse the membrane as a helical segment. The Cytoplasmic portion of the chain corresponds to 219 to 303 (TKRRLRERTR…LSKERKAARV (85 aa)). The segment at 234-276 (AVPAPPQRTSSRPLAELESVASQEDETEPSPEPEPLSSRADKP) is disordered. The chain crosses the membrane as a helical span at residues 304–325 (LGVIMGVFVVCWLPFFLMYAIV). Topologically, residues 326–340 (PFCTNCAPPSQRVVD) are extracellular. The helical transmembrane segment at 341–362 (FVTWLGYVNSSLNPIIYTIYNK) threads the bilayer. Residues 363–375 (DFRTAFSRLLRCD) are Cytoplasmic-facing.

It belongs to the G-protein coupled receptor 1 family.

The protein resides in the cell membrane. Probable G-protein coupled receptor for an amine. In Amphibalanus amphitrite (Striped barnacle), this protein is Probable G-protein coupled receptor No18.